The following is a 216-amino-acid chain: Protein Syd (216 aa).

Belongs to the Syd family.

It is found in the cell inner membrane. Interacts with the SecY protein in vivo. May bind preferentially to an uncomplexed state of SecY, thus functioning either as a chelating agent for excess SecY in the cell or as a regulatory factor that negatively controls the translocase function. The chain is Protein Syd from Shewanella frigidimarina (strain NCIMB 400).